Reading from the N-terminus, the 405-residue chain is Elongation factor Tu (405 aa).

Residues 10-213 (KEHVNVGTIG…AMDEYIPTPQ (204 aa)) form the tr-type G domain. The tract at residues 19–26 (GHVDHGKS) is G1. 19–26 (GHVDHGKS) is a binding site for GTP. Serine 26 provides a ligand contact to Mg(2+). Residues 64-68 (GITIN) are G2. The tract at residues 85-88 (DCPG) is G3. Residues 85-89 (DCPGH) and 140-143 (NKCD) each bind GTP. The segment at 140–143 (NKCD) is G4. Residues 178 to 180 (SAL) form a G5 region.

The protein belongs to the TRAFAC class translation factor GTPase superfamily. Classic translation factor GTPase family. EF-Tu/EF-1A subfamily. Monomer.

The protein resides in the cytoplasm. It carries out the reaction GTP + H2O = GDP + phosphate + H(+). Functionally, GTP hydrolase that promotes the GTP-dependent binding of aminoacyl-tRNA to the A-site of ribosomes during protein biosynthesis. This chain is Elongation factor Tu, found in Aquifex aeolicus (strain VF5).